We begin with the raw amino-acid sequence, 326 residues long: MGFTTRVKSEASEKKPFNFALFWDKYGTFFILAIIVAIFGSLSPEYFLTTNNITQIFVQSSVTVLIGMGEFFAILVAGIDLSVGAILALSGMVTAKLMLAGVDPFLAAMIGGVLVGGALGAINGCLVNWTGLHPFIITLGTNAIFRGITLVISDANSVYGFSFDFVNFFAASVIGIPVPVIFSLIVALILWFLTTRMRLGRNIYALGGNKNSAFYSGIDVKFHILVVFIISGVCAGLAGVVSTARLGAAEPLAGMGFETYAIASAIIGGTSFFGGKGRIFSVVIGGLIIGTINNGLNILQVQTYYQLVVMGGLIIAAVALDRLISK.

Topologically, residues 1 to 18 are cytoplasmic; that stretch reads MGFTTRVKSEASEKKPFN. A helical transmembrane segment spans residues 19-39; that stretch reads FALFWDKYGTFFILAIIVAIF. At 40–70 the chain is on the periplasmic side; sequence GSLSPEYFLTTNNITQIFVQSSVTVLIGMGE. Residues 71 to 91 traverse the membrane as a helical segment; that stretch reads FFAILVAGIDLSVGAILALSG. Topologically, residues 92–101 are cytoplasmic; the sequence is MVTAKLMLAG. A helical transmembrane segment spans residues 102 to 122; it reads VDPFLAAMIGGVLVGGALGAI. The Periplasmic portion of the chain corresponds to 123-124; the sequence is NG. The helical transmembrane segment at 125-145 threads the bilayer; it reads CLVNWTGLHPFIITLGTNAIF. Residues 146-149 are Cytoplasmic-facing; the sequence is RGIT. A helical transmembrane segment spans residues 150–170; sequence LVISDANSVYGFSFDFVNFFA. Over 171–172 the chain is Periplasmic; that stretch reads AS. A helical transmembrane segment spans residues 173–193; sequence VIGIPVPVIFSLIVALILWFL. Residues 194-221 are Cytoplasmic-facing; that stretch reads TTRMRLGRNIYALGGNKNSAFYSGIDVK. Residues 222–242 form a helical membrane-spanning segment; sequence FHILVVFIISGVCAGLAGVVS. The Periplasmic portion of the chain corresponds to 243–252; sequence TARLGAAEPL. Residues 253–273 form a helical membrane-spanning segment; the sequence is AGMGFETYAIASAIIGGTSFF. Residues 274–278 lie on the Cytoplasmic side of the membrane; that stretch reads GGKGR. Helical transmembrane passes span 279-299 and 300-320; these read IFSV…LNIL and QVQT…AVAL. At 321 to 326 the chain is on the cytoplasmic side; that stretch reads DRLISK.

Belongs to the binding-protein-dependent transport system permease family. AraH/RbsC subfamily.

It is found in the cell inner membrane. Part of the binding-protein-dependent transport system AlsBAC for D-allose; probably responsible for the translocation of the substrate across the membrane. The polypeptide is D-allose transport system permease protein AlsC (alsC) (Escherichia coli (strain K12)).